Here is a 322-residue protein sequence, read N- to C-terminus: Acetyl-coenzyme A carboxylase carboxyl transferase subunit alpha 2 (322 aa).

The CoA carboxyltransferase C-terminal domain maps to 37–294 (EINRLSARSE…KRVLQESLRN (258 aa)).

The protein belongs to the AccA family. In terms of assembly, acetyl-CoA carboxylase is a heterohexamer composed of biotin carboxyl carrier protein (AccB), biotin carboxylase (AccC) and two subunits each of ACCase subunit alpha (AccA) and ACCase subunit beta (AccD).

It localises to the cytoplasm. It catalyses the reaction N(6)-carboxybiotinyl-L-lysyl-[protein] + acetyl-CoA = N(6)-biotinyl-L-lysyl-[protein] + malonyl-CoA. It functions in the pathway lipid metabolism; malonyl-CoA biosynthesis; malonyl-CoA from acetyl-CoA: step 1/1. Functionally, component of the acetyl coenzyme A carboxylase (ACC) complex. First, biotin carboxylase catalyzes the carboxylation of biotin on its carrier protein (BCCP) and then the CO(2) group is transferred by the carboxyltransferase to acetyl-CoA to form malonyl-CoA. In terms of biological role, confers resistance to the endogenous polyketide antibiotic thailandamide. Can replace the endogenous gene in S.typhimurium, conferring slow growth and resistance to thailandamide. Can also replace the endogenous gene in E.coli, conferring resistance to thailandamide. This chain is Acetyl-coenzyme A carboxylase carboxyl transferase subunit alpha 2, found in Burkholderia thailandensis (strain ATCC 700388 / DSM 13276 / CCUG 48851 / CIP 106301 / E264).